A 104-amino-acid chain; its full sequence is Large ribosomal subunit protein uL24 (104 aa).

It belongs to the universal ribosomal protein uL24 family. Part of the 50S ribosomal subunit.

Its function is as follows. One of two assembly initiator proteins, it binds directly to the 5'-end of the 23S rRNA, where it nucleates assembly of the 50S subunit. In terms of biological role, one of the proteins that surrounds the polypeptide exit tunnel on the outside of the subunit. This is Large ribosomal subunit protein uL24 from Flavobacterium psychrophilum (strain ATCC 49511 / DSM 21280 / CIP 103535 / JIP02/86).